The following is a 397-amino-acid chain: 1-deoxy-D-xylulose 5-phosphate reductoisomerase (397 aa).

NADPH is bound by residues threonine 10, glycine 11, serine 12, isoleucine 13, glycine 36, asparagine 38, and asparagine 128. A 1-deoxy-D-xylulose 5-phosphate-binding site is contributed by lysine 129. Position 130 (glutamate 130) interacts with NADPH. Mn(2+) is bound at residue aspartate 154. Positions 155, 156, 180, and 203 each coordinate 1-deoxy-D-xylulose 5-phosphate. Glutamate 156 contacts Mn(2+). Glycine 209 is a binding site for NADPH. Residues asparagine 221, lysine 222, and glutamate 225 each coordinate 1-deoxy-D-xylulose 5-phosphate. Residue glutamate 225 coordinates Mn(2+).

Belongs to the DXR family. Mg(2+) serves as cofactor. It depends on Mn(2+) as a cofactor.

It catalyses the reaction 2-C-methyl-D-erythritol 4-phosphate + NADP(+) = 1-deoxy-D-xylulose 5-phosphate + NADPH + H(+). It functions in the pathway isoprenoid biosynthesis; isopentenyl diphosphate biosynthesis via DXP pathway; isopentenyl diphosphate from 1-deoxy-D-xylulose 5-phosphate: step 1/6. Catalyzes the NADPH-dependent rearrangement and reduction of 1-deoxy-D-xylulose-5-phosphate (DXP) to 2-C-methyl-D-erythritol 4-phosphate (MEP). In Solibacter usitatus (strain Ellin6076), this protein is 1-deoxy-D-xylulose 5-phosphate reductoisomerase.